The chain runs to 860 residues: Leucine--tRNA ligase (860 aa).

A 'HIGH' region motif is present at residues P42 to H52. Positions K619–S623 match the 'KMSKS' region motif. K622 lines the ATP pocket.

This sequence belongs to the class-I aminoacyl-tRNA synthetase family.

The protein localises to the cytoplasm. The catalysed reaction is tRNA(Leu) + L-leucine + ATP = L-leucyl-tRNA(Leu) + AMP + diphosphate. This Histophilus somni (strain 129Pt) (Haemophilus somnus) protein is Leucine--tRNA ligase.